A 622-amino-acid polypeptide reads, in one-letter code: Telomerase-associated protein of 75 kDa (622 aa).

Component of the telomerase holoenzyme complex, composed of the catalytic core (the catalytic subunit TERT, the telomerase RNA template component TER and TAP65/p65), which is associated with two heterotrimeric subcomplexes: (i) the replication protein A (RPA)-related subcomplex, composed of TEB1, RPA2/TEB2 and RPA3/TEB3 and (ii) the CST-like subcomplex, composed of TAP75/p75, TAP45/p45 and TAP19/p19. TEB1 and the CST-like subcomplex are tethered to the catalytic core by TAP50/p50.

It is found in the chromosome. The protein localises to the telomere. Its function is as follows. Component of a CST-like subcomplex of the holoenzyme telomerase ribonucleoprotein complex, which stimulates telomerase complementary-strand synthesis. Telomerase is an essential ribonucleoprotein enzyme that copies new telomeric repeats onto chromosome ends by repetitively synthesizing the short telomere-repeat sequence 5'-TTGGGG-3' using an RNA template component TER. The CST-like subcomplex (also named 7-4-1) binds telomeric single-stranded DNA and coordinates telomere G-strand and C-strand synthesis. This chain is Telomerase-associated protein of 75 kDa, found in Tetrahymena thermophila (strain SB210).